Here is a 338-residue protein sequence, read N- to C-terminus: MTTLRLLISDSYDPWFNLAVEECIFRQMPATQRVLFLWRNADTVVIGRAQNPWKECNTRRMEEDNVRLARRSSGGGAVFHDLGNTCFTFMAGKPEYDKTISTAIVLKALNSLGVNAEASGRNDLVVKTREGDRKVSGSAYRETKDRGFHHGTLLLNADLSRLANYLNPDKKKLQAKGITSVRGRVANLVELMPGITHEQICDAIREAFFEHYSERVEAEIISPDKTPDLPNFAETFARQSSWEWNFGQAPAFSHLLDERFTWGGVELHFDVERGHITRTQVFTDSLNPAPLEALAARLQGCVYRAETLKQECDALVVDFPEQETELRELSHWIAQAVR.

Positions 29–216 (PATQRVLFLW…AFFEHYSERV (188 aa)) constitute a BPL/LPL catalytic domain. Residues R71, 76–79 (GAVF), and K134 contribute to the ATP site. K134 is a binding site for (R)-lipoate.

This sequence belongs to the LplA family. In terms of assembly, monomer.

Its subcellular location is the cytoplasm. The catalysed reaction is L-lysyl-[lipoyl-carrier protein] + (R)-lipoate + ATP = N(6)-[(R)-lipoyl]-L-lysyl-[lipoyl-carrier protein] + AMP + diphosphate + H(+). It participates in protein modification; protein lipoylation via exogenous pathway; protein N(6)-(lipoyl)lysine from lipoate: step 1/2. It functions in the pathway protein modification; protein lipoylation via exogenous pathway; protein N(6)-(lipoyl)lysine from lipoate: step 2/2. Functionally, catalyzes both the ATP-dependent activation of exogenously supplied lipoate to lipoyl-AMP and the transfer of the activated lipoyl onto the lipoyl domains of lipoate-dependent enzymes. This chain is Lipoate-protein ligase A, found in Enterobacter sp. (strain 638).